A 202-amino-acid polypeptide reads, in one-letter code: MGTRWFAKNTTMSKNSIVIGVDLDGVCADFYGRMRQIASEWFERPIDELPEEVSWGLSEWGITNPSQYDSLHRFAVTQRELFSSMEAIPGARKYLRQLSDEGFRIRIITHRLFIHYFHATAVQQTVNWLDSHGIPYWDLCFVKEKTQVGADIYIEDSPENVAQLRGRGLFTICFGNSTNRHIEELRAASWQDVYDMIKAFVT.

Asp22 serves as the catalytic Nucleophile. Positions 22, 24, and 156 each coordinate Mg(2+). Residue Asp24 is the Proton donor of the active site.

This sequence belongs to the 5'(3')-deoxyribonucleotidase family. Requires Mg(2+) as cofactor.

Dephosphorylates the 5' and 2'(3')-phosphates of deoxyribonucleotides. In Chlorobaculum tepidum (strain ATCC 49652 / DSM 12025 / NBRC 103806 / TLS) (Chlorobium tepidum), this protein is Putative 5'(3')-deoxyribonucleotidase.